The primary structure comprises 245 residues: Tetraspanin-6 (245 aa).

Residues 1–19 (MASPSRRLQTKPVITCFKS) lie on the Cytoplasmic side of the membrane. Residues 20-40 (VLLIYTFIFWITGVILLAVGI) form a helical membrane-spanning segment. Topologically, residues 41-59 (WGKVSLENYFSLLNEKATN) are extracellular. A helical transmembrane segment spans residues 60 to 80 (VPFVLIATGTVIILLGTFGCF). The Cytoplasmic portion of the chain corresponds to 81-93 (ATCRASAWMLKLY). A helical transmembrane segment spans residues 94 to 114 (AMFLTLIFLVELVAAIVGFVF). Residues 115–208 (RHEIKNSFKN…IKVMTIIESE (94 aa)) are Extracellular-facing. Asn134 carries an N-linked (GlcNAc...) asparagine glycan. A helical transmembrane segment spans residues 209-229 (MGVVAGISFGVACFQLIGIFL). The Cytoplasmic segment spans residues 230 to 245 (AYCLSRAITNNQYEIV).

This sequence belongs to the tetraspanin (TM4SF) family.

It localises to the membrane. This chain is Tetraspanin-6 (TSPAN6), found in Pongo abelii (Sumatran orangutan).